The chain runs to 245 residues: Exosome complex component RRP41 (245 aa).

Alanine 2 carries the post-translational modification N-acetylalanine.

Belongs to the RNase PH family. In terms of assembly, component of the RNA exosome core complex (Exo-9), composed of EXOSC1, EXOSC2, EXOSC3, EXOSC4, EXOSC5, EXOSC6, EXOSC7, EXOSC8 and EXOSC9; within the complex interacts with EXOSC2, EXOSC7 and EXOSC9. The catalytically inactive RNA exosome core complex (Exo-9) associates with the catalytic subunit EXOSC10/RRP6. Exo-9 may associate with DIS3 to form the nucleolar exosome complex, or DIS3L to form the cytoplasmic exosome complex. Exo-9 is formed by a hexameric base ring consisting of the heterodimers EXOSC4-EXOSC9, EXOSC5-EXOSC8 and EXOSC6-EXOSC7, and a cap ring consisting of EXOSC1, EXOSC2 and EXOSC3. The RNA exosome complex associates with cofactors C1D/RRP47, MPHOSPH6/MPP6 and MTREX/MTR4. Interacts with DDX60. Interacts with DIS3; the interaction is direct.

The protein localises to the cytoplasm. Its subcellular location is the nucleus. The protein resides in the nucleolus. It is found in the nucleoplasm. In terms of biological role, non-catalytic component of the RNA exosome complex which has 3'-&gt;5' exoribonuclease activity and participates in a multitude of cellular RNA processing and degradation events. In the nucleus, the RNA exosome complex is involved in proper maturation of stable RNA species such as rRNA, snRNA and snoRNA, in the elimination of RNA processing by-products and non-coding 'pervasive' transcripts, such as antisense RNA species and promoter-upstream transcripts (PROMPTs), and of mRNAs with processing defects, thereby limiting or excluding their export to the cytoplasm. The RNA exosome may be involved in Ig class switch recombination (CSR) and/or Ig variable region somatic hypermutation (SHM) by targeting AICDA deamination activity to transcribed dsDNA substrates. In the cytoplasm, the RNA exosome complex is involved in general mRNA turnover and specifically degrades inherently unstable mRNAs containing AU-rich elements (AREs) within their 3' untranslated regions, and in RNA surveillance pathways, preventing translation of aberrant mRNAs. It seems to be involved in degradation of histone mRNA. The catalytic inactive RNA exosome core complex of 9 subunits (Exo-9) is proposed to play a pivotal role in the binding and presentation of RNA for ribonucleolysis, and to serve as a scaffold for the association with catalytic subunits and accessory proteins or complexes. EXOSC4 binds to ARE-containing RNAs. The polypeptide is Exosome complex component RRP41 (EXOSC4) (Bos taurus (Bovine)).